The following is a 346-amino-acid chain: D-erythrose-4-phosphate dehydrogenase (346 aa).

Residue 11-12 (RI) coordinates NAD(+). Substrate contacts are provided by residues 163–165 (SCT), R209, 222–223 (TK), and R245. The Nucleophile role is filled by C164. NAD(+) is bound at residue N327.

It belongs to the glyceraldehyde-3-phosphate dehydrogenase family. Epd subfamily. As to quaternary structure, homotetramer.

Its subcellular location is the cytoplasm. It catalyses the reaction D-erythrose 4-phosphate + NAD(+) + H2O = 4-phospho-D-erythronate + NADH + 2 H(+). It participates in cofactor biosynthesis; pyridoxine 5'-phosphate biosynthesis; pyridoxine 5'-phosphate from D-erythrose 4-phosphate: step 1/5. Its function is as follows. Catalyzes the NAD-dependent conversion of D-erythrose 4-phosphate to 4-phosphoerythronate. The chain is D-erythrose-4-phosphate dehydrogenase from Vibrio vulnificus (strain YJ016).